The following is a 949-amino-acid chain: AP-1 complex subunit beta-1 (949 aa).

K318 carries the post-translational modification N6-acetyllysine. Y574 carries the post-translational modification 3'-nitrotyrosine. The segment at 592 to 623 (SLPPRTASSESTESPEAAPAGAPASDQPDVIP) is disordered. Residues 594 to 616 (PPRTASSESTESPEAAPAGAPAS) show a composition bias toward low complexity.

Belongs to the adaptor complexes large subunit family. Adaptor protein complex 1 (AP-1) is a heterotetramer composed of two large adaptins (gamma-type subunit AP1G1 and beta-type subunit AP1B1), a medium adaptin (mu-type subunit AP1M1 or AP1M2) and a small adaptin (sigma-type subunit AP1S1 or AP1S2 or AP1S3). The N-terminus is blocked.

It localises to the golgi apparatus. Its subcellular location is the cytoplasmic vesicle. The protein localises to the clathrin-coated vesicle membrane. Its function is as follows. Subunit of clathrin-associated adaptor protein complex 1 that plays a role in protein sorting in the late-Golgi/trans-Golgi network (TGN) and/or endosomes. The AP complexes mediate both the recruitment of clathrin to membranes and the recognition of sorting signals within the cytosolic tails of transmembrane cargo molecules. In Rattus norvegicus (Rat), this protein is AP-1 complex subunit beta-1 (Ap1b1).